The sequence spans 1775 residues: Protein TIC 214 (1775 aa).

A run of 6 helical transmembrane segments spans residues 19–39 (IINS…FSIG), 68–88 (FIAG…HLAL), 91–111 (PHTI…WNNH), 133–153 (VFLN…SSML), 176–196 (VGWL…LVWI), and 227–247 (IFSI…PSPI). The tract at residues 1491 to 1512 (KESAGQGERESDNEKKKNLESA) is disordered.

Belongs to the TIC214 family. As to quaternary structure, part of the Tic complex.

The protein resides in the plastid. Its subcellular location is the chloroplast inner membrane. Involved in protein precursor import into chloroplasts. May be part of an intermediate translocation complex acting as a protein-conducting channel at the inner envelope. The polypeptide is Protein TIC 214 (Lobularia maritima (Sweet alyssum)).